The chain runs to 297 residues: Homeobox protein HMX3 (297 aa).

Disordered regions lie at residues 24 to 43 (NSDS…KAGL) and 96 to 172 (AAQK…RKKK). Composition is skewed to basic and acidic residues over residues 109-123 (TDRD…SDPD) and 145-166 (EDGK…ADKK). The homeobox DNA-binding region spans 170–229 (KKKTRTVFSRSQVFQLESTFDMKRYLSSSERAGLAASLHLTETQVKIWFQNRRNKWKRQL).

It belongs to the HMX homeobox family. Expressed in the ear placode and vesicle and in cells forming the vestibulo-acoustic ganglion. Also expressed in the lateral line.

The protein localises to the nucleus. In terms of biological role, transcription factor involved in specification of neuronal cell types and which is required for inner ear and hypothalamus development. Binds to the 5'-CAAGTG-3' core sequence. This chain is Homeobox protein HMX3 (hmx3), found in Danio rerio (Zebrafish).